The chain runs to 227 residues: uncharacterized protein (227 aa).

Transmembrane regions (helical) follow at residues 25 to 45 (LLGFSFIPASAGAALAANAGF), 49 to 69 (AAFGSRWIGFAVVLAFFYGMI), 80 to 100 (TGVTLLMVFTFGMGVLIGPVL), 111 to 131 (KIVGIAAAMTAAVFLTMSALA), 144 to 164 (FLTVGAVILMVAVVANLFLGI), 165 to 185 (PALALTISAGFVLFSSLMIMW), and 201 to 221 (AALTLFISLYNIFSSLLNILL).

It localises to the cell membrane. This is an uncharacterized protein from Neisseria meningitidis serogroup B (strain ATCC BAA-335 / MC58).